Reading from the N-terminus, the 969-residue chain is Alpha-glucosidase (969 aa).

Residues 1–24 (MMISTAYQSLFLTALFSAISIAVG) form the signal peptide. N-linked (GlcNAc...) asparagine glycosylation is found at N37, N67, N99, N116, N139, N146, N209, N245, N249, N331, N406, N429, N462, and N470. The Nucleophile role is filled by D481. The active site involves E484. Residues N520, N523, and N589 are each glycosylated (N-linked (GlcNAc...) asparagine). D647 acts as the Proton donor in catalysis. N648, N801, N810, N821, N885, N915, N934, N942, N954, and N966 each carry an N-linked (GlcNAc...) asparagine glycan.

Belongs to the glycosyl hydrolase 31 family.

It localises to the secreted. It catalyses the reaction Hydrolysis of terminal, non-reducing (1-&gt;4)-linked alpha-D-glucose residues with release of alpha-D-glucose.. Its function is as follows. Hydrolyzes malto-oligosaccharides, but has a low activity toward soluble starch. This is Alpha-glucosidase (agl1) from Schizosaccharomyces pombe (strain 972 / ATCC 24843) (Fission yeast).